Reading from the N-terminus, the 139-residue chain is Transcription antitermination protein NusB (139 aa).

Belongs to the NusB family.

In terms of biological role, involved in transcription antitermination. Required for transcription of ribosomal RNA (rRNA) genes. Binds specifically to the boxA antiterminator sequence of the ribosomal RNA (rrn) operons. The chain is Transcription antitermination protein NusB from Edwardsiella ictaluri (strain 93-146).